A 457-amino-acid chain; its full sequence is Bifunctional protein GlmU (457 aa).

The segment at 1-229 is pyrophosphorylase; sequence MDLAAVILAA…PVEVTGINDR (229 aa). Residues 8–11, Lys22, Gln72, and 77–78 contribute to the UDP-N-acetyl-alpha-D-glucosamine site; these read LAAG and GT. A Mg(2+)-binding site is contributed by Asp102. The UDP-N-acetyl-alpha-D-glucosamine site is built by Gly139, Glu154, Asn169, and Asn227. Asn227 is a Mg(2+) binding site. The interval 230–250 is linker; it reads RQLAEVEKYLRRRVLEDLMQS. The tract at residues 251 to 457 is N-acetyltransferase; that stretch reads GVTVLDPAST…WAAKKRDKKV (207 aa). The UDP-N-acetyl-alpha-D-glucosamine site is built by Arg332 and Lys350. His362 acts as the Proton acceptor in catalysis. Tyr365 and Asn376 together coordinate UDP-N-acetyl-alpha-D-glucosamine. Acetyl-CoA-binding positions include 385–386, Ser404, Ala422, and Arg439; that span reads NY.

The protein in the N-terminal section; belongs to the N-acetylglucosamine-1-phosphate uridyltransferase family. This sequence in the C-terminal section; belongs to the transferase hexapeptide repeat family. As to quaternary structure, homotrimer. Requires Mg(2+) as cofactor.

The protein localises to the cytoplasm. It carries out the reaction alpha-D-glucosamine 1-phosphate + acetyl-CoA = N-acetyl-alpha-D-glucosamine 1-phosphate + CoA + H(+). The enzyme catalyses N-acetyl-alpha-D-glucosamine 1-phosphate + UTP + H(+) = UDP-N-acetyl-alpha-D-glucosamine + diphosphate. It functions in the pathway nucleotide-sugar biosynthesis; UDP-N-acetyl-alpha-D-glucosamine biosynthesis; N-acetyl-alpha-D-glucosamine 1-phosphate from alpha-D-glucosamine 6-phosphate (route II): step 2/2. The protein operates within nucleotide-sugar biosynthesis; UDP-N-acetyl-alpha-D-glucosamine biosynthesis; UDP-N-acetyl-alpha-D-glucosamine from N-acetyl-alpha-D-glucosamine 1-phosphate: step 1/1. It participates in bacterial outer membrane biogenesis; LPS lipid A biosynthesis. Its function is as follows. Catalyzes the last two sequential reactions in the de novo biosynthetic pathway for UDP-N-acetylglucosamine (UDP-GlcNAc). The C-terminal domain catalyzes the transfer of acetyl group from acetyl coenzyme A to glucosamine-1-phosphate (GlcN-1-P) to produce N-acetylglucosamine-1-phosphate (GlcNAc-1-P), which is converted into UDP-GlcNAc by the transfer of uridine 5-monophosphate (from uridine 5-triphosphate), a reaction catalyzed by the N-terminal domain. In Pelotomaculum thermopropionicum (strain DSM 13744 / JCM 10971 / SI), this protein is Bifunctional protein GlmU.